The sequence spans 566 residues: Liver carboxylesterase 1 (566 aa).

Residues 1–18 (MWLRALVLATLAAFTAWG) form the signal peptide. Asn79 is a glycosylation site (N-linked (GlcNAc...) asparagine). A disulfide bridge links Cys87 with Cys116. The active-site Acyl-ester intermediate is the Ser221. Cys274 and Cys285 form a disulfide bridge. Glu354 (charge relay system) is an active-site residue. Position 379 is a phosphoserine (Ser379). His467 acts as the Charge relay system in catalysis.

It belongs to the type-B carboxylesterase/lipase family. Homotrimer and homohexamer. Binds to beta-glucuronidase.

It localises to the endoplasmic reticulum lumen. The protein localises to the cytoplasm. It is found in the lipid droplet. The enzyme catalyses a carboxylic ester + H2O = an alcohol + a carboxylate + H(+). The catalysed reaction is cholesteryl (9Z-octadecenoate) + H2O = cholesterol + (9Z)-octadecenoate + H(+). It catalyses the reaction 2-(5Z,8Z,11Z,14Z-eicosatetraenoyl)-glycerol + H2O = glycerol + (5Z,8Z,11Z,14Z)-eicosatetraenoate + H(+). It carries out the reaction prostaglandin E2 1-glyceryl ester + H2O = prostaglandin E2 + glycerol + H(+). The enzyme catalyses a cholesterol ester + H2O = cholesterol + a fatty acid + H(+). The catalysed reaction is prostaglandin F2alpha 1-glyceryl ester + H2O = prostaglandin F2alpha + glycerol + H(+). Involved in the detoxification of xenobiotics and in the activation of ester and amide prodrugs. Hydrolyzes aromatic and aliphatic esters, but has no catalytic activity toward amides or a fatty acyl-CoA ester. Displays fatty acid ethyl ester synthase activity, catalyzing the ethyl esterification of oleic acid to ethyloleate. Converts monoacylglycerides to free fatty acids and glycerol. Hydrolyzes of 2-arachidonoylglycerol and prostaglandins. Hydrolyzes cellular cholesteryl esters to free cholesterols and promotes reverse cholesterol transport (RCT) by facilitating both the initial and final steps in the process. First of all, allows free cholesterol efflux from macrophages to extracellular cholesterol acceptors and secondly, releases free cholesterol from lipoprotein-delivered cholesteryl esters in the liver for bile acid synthesis or direct secretion into the bile. The protein is Liver carboxylesterase 1 of Macaca fascicularis (Crab-eating macaque).